Reading from the N-terminus, the 215-residue chain is Probable GTP-binding protein EngB (215 aa).

Residues 30-204 form the EngB-type G domain; that stretch reads TGIEVAFAGR…RQKLDTWFSE (175 aa). GTP contacts are provided by residues 38 to 45, 65 to 69, 83 to 86, 150 to 153, and 183 to 185; these read GRSNAGKS, GRTQL, DLPG, TKAD, and FSS. Mg(2+)-binding residues include Ser-45 and Thr-67.

This sequence belongs to the TRAFAC class TrmE-Era-EngA-EngB-Septin-like GTPase superfamily. EngB GTPase family. The cofactor is Mg(2+).

In terms of biological role, necessary for normal cell division and for the maintenance of normal septation. The sequence is that of Probable GTP-binding protein EngB from Escherichia coli O1:K1 / APEC.